The chain runs to 91 residues: Potassium channel toxin TdiKIK (91 aa).

Residues 1–25 (MVATNRCCVFALLVALLLIHSLAEA) form the signal peptide. The propeptide occupies 26 to 44 (GKGKEVLGKIKNKLVEVKE). In terms of domain architecture, BetaSPN-type CS-alpha/beta spans 58–91 (EYACPVIDKFCEDHCAAKNAIGKCDDFKCQCLNS). 3 cysteine pairs are disulfide-bonded: cysteine 61–cysteine 81, cysteine 68–cysteine 86, and cysteine 72–cysteine 88.

As to expression, expressed by the venom gland.

Its subcellular location is the secreted. The full peptide presents antibacterial and cytotoxic activities. The synthetic C-terminus (AA 33-76) inhibits voltage-gated potassium channels Kv1.1/KCNA1, Kv1.2/KCNA2, and Kv1.3/KCNA3. The polypeptide is Potassium channel toxin TdiKIK (Tityus discrepans (Venezuelan scorpion)).